The chain runs to 476 residues: Aspartyl/glutamyl-tRNA(Asn/Gln) amidotransferase subunit B (476 aa).

The protein belongs to the GatB/GatE family. GatB subfamily. As to quaternary structure, heterotrimer of A, B and C subunits.

It catalyses the reaction L-glutamyl-tRNA(Gln) + L-glutamine + ATP + H2O = L-glutaminyl-tRNA(Gln) + L-glutamate + ADP + phosphate + H(+). The enzyme catalyses L-aspartyl-tRNA(Asn) + L-glutamine + ATP + H2O = L-asparaginyl-tRNA(Asn) + L-glutamate + ADP + phosphate + 2 H(+). In terms of biological role, allows the formation of correctly charged Asn-tRNA(Asn) or Gln-tRNA(Gln) through the transamidation of misacylated Asp-tRNA(Asn) or Glu-tRNA(Gln) in organisms which lack either or both of asparaginyl-tRNA or glutaminyl-tRNA synthetases. The reaction takes place in the presence of glutamine and ATP through an activated phospho-Asp-tRNA(Asn) or phospho-Glu-tRNA(Gln). This is Aspartyl/glutamyl-tRNA(Asn/Gln) amidotransferase subunit B from Neisseria meningitidis serogroup B (strain ATCC BAA-335 / MC58).